A 1097-amino-acid polypeptide reads, in one-letter code: Nitric oxide synthase-like protein (1097 aa).

Residue C77 participates in heme b binding. The L-arginine site is built by Q140, W249, Y250, E254, and N259. Residues W340 and F353 each contribute to the (6R)-L-erythro-5,6,7,8-tetrahydrobiopterin site. Y368 is a binding site for heme b. Residues 387–410 form a calmodulin-binding region; it reads KRPINRKFHFKQIARAVKFTSKLF. Positions 420–615 constitute a Flavodoxin-like domain; the sequence is ATVLYATETG…AFRKWASSVF (196 aa). FMN contacts are provided by residues 426 to 430 and 561 to 592; these read TETGK and VFALGSSAYPNFCNFGKYVDKLLVDLGGERIH. The region spanning 669-914 is the FAD-binding FR-type domain; the sequence is KQFVSCTVKA…IRSAPNFHLP (246 aa). Residues 704–715 and 847–857 each bind FAD; these read YNPGDHVGIIAC and LQPRFYSISSS. NADP(+) is bound by residues 922–940 and 1019–1034; these read ILIGPGTGIAPFRGFWHHR and GAHFYVCGDCKMAEDV.

It belongs to the NOS family. The cofactor is heme b. FAD serves as cofactor. FMN is required as a cofactor.

The catalysed reaction is 2 L-arginine + 3 NADPH + 4 O2 + H(+) = 2 L-citrulline + 2 nitric oxide + 3 NADP(+) + 4 H2O. Functionally, produces nitric oxide (NO) which is a messenger molecule with diverse functions throughout the body. In Bombyx mori (Silk moth), this protein is Nitric oxide synthase-like protein.